Here is a 484-residue protein sequence, read N- to C-terminus: PTS system N-acetylmuramic acid-specific EIIBC component (484 aa).

The 89-residue stretch at 1-89 (MAKITTSMIQ…NEMMEGEEDN (89 aa)) folds into the PTS EIIB type-1 domain. C28 (phosphocysteine intermediate; for EIIB activity) is an active-site residue. The tract at residues 83 to 106 (MEGEEDNSASTTAESRDLKDVASE) is disordered. The segment covering 96-106 (ESRDLKDVASE) has biased composition (basic and acidic residues). One can recognise a PTS EIIC type-1 domain in the interval 124–484 (SKFATIFTPL…FFGTKNVDLS (361 aa)). 10 consecutive transmembrane segments (helical) span residues 126–146 (FATI…LLGF), 168–188 (LILY…ILIG), 194–214 (AFGG…LGYN), 232–252 (GIDP…GAGV), 273–293 (TLLI…GVLF), 312–332 (ILAG…FVPV), 345–365 (LFPI…ALYA), 379–399 (GSII…VTLP), 404–424 (FITA…VSYM), and 451–471 (IFAG…AGFL).

The protein localises to the cell inner membrane. It catalyses the reaction N-acetyl-beta-D-muramate(out) + N(pros)-phospho-L-histidyl-[protein] = N-acetyl-beta-D-muramate 6-phosphate(in) + L-histidyl-[protein]. The phosphoenolpyruvate-dependent sugar phosphotransferase system (sugar PTS), a major carbohydrate active transport system, catalyzes the phosphorylation of incoming sugar substrates concomitantly with their translocation across the cell membrane. This system is involved in N-acetylmuramic acid (MurNAc) transport, yielding cytoplasmic MurNAc-6-P. Is also able to take up anhydro-N-acetylmuramic acid (anhMurNAc), but cannot phosphorylate the carbon 6, probably because of the 1,6-anhydro ring. The chain is PTS system N-acetylmuramic acid-specific EIIBC component (murP) from Aliivibrio fischeri (strain ATCC 700601 / ES114) (Vibrio fischeri).